We begin with the raw amino-acid sequence, 159 residues long: Large ribosomal subunit protein mL50 (159 aa).

This sequence belongs to the mitochondrion-specific ribosomal protein mL50 family. In terms of assembly, component of the mitochondrial ribosome large subunit (39S) which comprises a 16S rRNA and about 50 distinct proteins.

The protein localises to the mitochondrion. The sequence is that of Large ribosomal subunit protein mL50 (MRPL50) from Bos taurus (Bovine).